Consider the following 202-residue polypeptide: Orotate phosphoribosyltransferase (202 aa).

Residues Lys-93 and 113 to 121 (EDIITTGGS) each bind 5-phospho-alpha-D-ribose 1-diphosphate. Orotate-binding residues include Thr-117 and Arg-145.

It belongs to the purine/pyrimidine phosphoribosyltransferase family. PyrE subfamily. Homodimer. The cofactor is Mg(2+).

It catalyses the reaction orotidine 5'-phosphate + diphosphate = orotate + 5-phospho-alpha-D-ribose 1-diphosphate. The protein operates within pyrimidine metabolism; UMP biosynthesis via de novo pathway; UMP from orotate: step 1/2. Functionally, catalyzes the transfer of a ribosyl phosphate group from 5-phosphoribose 1-diphosphate to orotate, leading to the formation of orotidine monophosphate (OMP). This chain is Orotate phosphoribosyltransferase, found in Campylobacter jejuni subsp. jejuni serotype O:2 (strain ATCC 700819 / NCTC 11168).